Here is a 269-residue protein sequence, read N- to C-terminus: Undecaprenyl-diphosphatase (269 aa).

7 helical membrane passes run Phe41–Tyr61, Gly78–Leu98, Leu107–Ile127, Ser148–Ala167, Ala184–Leu204, Leu213–Val233, and Phe248–Val268.

Belongs to the UppP family.

It is found in the cell membrane. It carries out the reaction di-trans,octa-cis-undecaprenyl diphosphate + H2O = di-trans,octa-cis-undecaprenyl phosphate + phosphate + H(+). Catalyzes the dephosphorylation of undecaprenyl diphosphate (UPP). Confers resistance to bacitracin. This is Undecaprenyl-diphosphatase from Thermoanaerobacter pseudethanolicus (strain ATCC 33223 / 39E) (Clostridium thermohydrosulfuricum).